Reading from the N-terminus, the 389-residue chain is Alpha carbonic anhydrase 8 (389 aa).

A signal peptide spans Met-1–Ser-22. Residues Ser-21–Trp-153 are disordered. A compositionally biased stretch (pro residues) spans Ala-25 to Ala-129. Residues Thr-138 to Lys-374 enclose the Alpha-carbonic anhydrase domain. Cysteines 163 and 324 form a disulfide. Residue Asn-196 is glycosylated (N-linked (GlcNAc...) asparagine). The Proton acceptor role is filled by His-204. The Zn(2+) site is built by His-232, His-234, and His-251. Thr-320–Ala-321 contributes to the substrate binding site. Asn-385 is a glycosylation site (N-linked (GlcNAc...) asparagine).

Belongs to the alpha-class carbonic anhydrase family. Requires Zn(2+) as cofactor. In terms of processing, N-glycosylated.

It localises to the plastid. The protein localises to the chloroplast stroma. The enzyme catalyses hydrogencarbonate + H(+) = CO2 + H2O. Functionally, reversible hydration of carbon dioxide. In Arabidopsis thaliana (Mouse-ear cress), this protein is Alpha carbonic anhydrase 8 (ACA8).